Reading from the N-terminus, the 106-residue chain is Replication restart protein PriB (106 aa).

An SSB domain is found at Thr4–Asp103.

It belongs to the PriB family. As to quaternary structure, homodimer. Interacts with PriA and DnaT. Component of the replication restart primosome. Primosome assembly occurs via a 'hand-off' mechanism. PriA binds to replication forks, subsequently PriB then DnaT bind; DnaT then displaces ssDNA to generate the helicase loading substrate.

In terms of biological role, involved in the restart of stalled replication forks, which reloads the replicative helicase on sites other than the origin of replication; the PriA-PriB pathway is the major replication restart pathway. During primosome assembly it facilitates complex formation between PriA and DnaT on DNA; stabilizes PriA on DNA. Stimulates the DNA unwinding activity of PriA helicase. This is Replication restart protein PriB from Yersinia pestis.